The following is a 387-amino-acid chain: Probable protein phosphatase 2C 25 (387 aa).

The PPM-type phosphatase domain maps to 52–351 (EFSFAVVQAN…DDITVVVVYI (300 aa)). Mn(2+)-binding residues include D83, G84, D283, and D342.

Belongs to the PP2C family. Mg(2+) is required as a cofactor. It depends on Mn(2+) as a cofactor.

The enzyme catalyses O-phospho-L-seryl-[protein] + H2O = L-seryl-[protein] + phosphate. It catalyses the reaction O-phospho-L-threonyl-[protein] + H2O = L-threonyl-[protein] + phosphate. This Oryza sativa subsp. japonica (Rice) protein is Probable protein phosphatase 2C 25.